An 88-amino-acid polypeptide reads, in one-letter code: Bombyxin B-8 (88 aa).

The signal sequence occupies residues 1 to 18; it reads MKTSVIFVLIVLNLMWSG. 3 disulfides stabilise this stretch: cysteine 28–cysteine 74, cysteine 40–cysteine 87, and cysteine 73–cysteine 78. A propeptide spans 47–65 (c peptide like); that stretch reads GGAQYAPYFWQKAYLGSRG.

Belongs to the insulin family. Heterodimer of a B chain and an A chain linked by two disulfide bonds.

Its subcellular location is the secreted. In terms of biological role, brain peptide responsible for activation of prothoracic glands to produce ecdysone in insects. This is Bombyxin B-8 (BBXB8) from Bombyx mori (Silk moth).